The primary structure comprises 712 residues: Polyribonucleotide nucleotidyltransferase (712 aa).

Mg(2+) contacts are provided by Asp484 and Asp490. Positions 551-610 (PKVFTIQIHPDKIRDIIGPGGKVIRAIQAETGTRVDVDDSGLVKVSAVNLEEGEAALQMI) constitute a KH domain. The region spanning 620-688 (GAVYEGTVVK…KDGKIRLSRK (69 aa)) is the S1 motif domain. Positions 689-712 (ALLEEENGKSGPENGAPQRDKNRH) are disordered.

The protein belongs to the polyribonucleotide nucleotidyltransferase family. The cofactor is Mg(2+).

The protein localises to the cytoplasm. The catalysed reaction is RNA(n+1) + phosphate = RNA(n) + a ribonucleoside 5'-diphosphate. Involved in mRNA degradation. Catalyzes the phosphorolysis of single-stranded polyribonucleotides processively in the 3'- to 5'-direction. This Desulfatibacillum aliphaticivorans protein is Polyribonucleotide nucleotidyltransferase.